We begin with the raw amino-acid sequence, 156 residues long: MPRRRSVEARKILPDPKFGSELLAKFINVIMVDGKKSVAESIVYGALETLAQRTGKEPLEAFEVALENVRPTVEVKSRRVGGSTYQVPVEVRPVRRNALGMRWIVEAARKRGDKSMALRLANELSDASDNKGAAVKKREDVHRMAEANKAFAHYRW.

It belongs to the universal ribosomal protein uS7 family. In terms of assembly, part of the 30S ribosomal subunit. Contacts proteins S9 and S11.

One of the primary rRNA binding proteins, it binds directly to 16S rRNA where it nucleates assembly of the head domain of the 30S subunit. Is located at the subunit interface close to the decoding center, probably blocks exit of the E-site tRNA. In Haemophilus influenzae (strain 86-028NP), this protein is Small ribosomal subunit protein uS7.